Here is a 341-residue protein sequence, read N- to C-terminus: tRNA-specific 2-thiouridylase MnmA (341 aa).

ATP-binding positions include 8–15 (GMSGGVDS) and Met34. The active-site Nucleophile is Cys94. Cys94 and Cys188 are joined by a disulfide. Gly118 contacts ATP. Residues 136 to 138 (KDQ) form an interaction with tRNA region. The Cysteine persulfide intermediate role is filled by Cys188. The interval 290 to 291 (RY) is interaction with tRNA.

This sequence belongs to the MnmA/TRMU family.

The protein resides in the cytoplasm. It catalyses the reaction S-sulfanyl-L-cysteinyl-[protein] + uridine(34) in tRNA + AH2 + ATP = 2-thiouridine(34) in tRNA + L-cysteinyl-[protein] + A + AMP + diphosphate + H(+). In terms of biological role, catalyzes the 2-thiolation of uridine at the wobble position (U34) of tRNA, leading to the formation of s(2)U34. This Sulfurimonas denitrificans (strain ATCC 33889 / DSM 1251) (Thiomicrospira denitrificans (strain ATCC 33889 / DSM 1251)) protein is tRNA-specific 2-thiouridylase MnmA.